The primary structure comprises 326 residues: N-acetyl-gamma-glutamyl-phosphate reductase (326 aa).

Cys155 is an active-site residue.

The protein belongs to the NAGSA dehydrogenase family. Type 1 subfamily.

Its subcellular location is the cytoplasm. The enzyme catalyses N-acetyl-L-glutamate 5-semialdehyde + phosphate + NADP(+) = N-acetyl-L-glutamyl 5-phosphate + NADPH + H(+). The protein operates within amino-acid biosynthesis; L-arginine biosynthesis; N(2)-acetyl-L-ornithine from L-glutamate: step 3/4. Its function is as follows. Catalyzes the NADPH-dependent reduction of N-acetyl-5-glutamyl phosphate to yield N-acetyl-L-glutamate 5-semialdehyde. The chain is N-acetyl-gamma-glutamyl-phosphate reductase from Shewanella baltica (strain OS155 / ATCC BAA-1091).